The primary structure comprises 281 residues: Fibrinogen-like protein 1-like protein (281 aa).

The N-terminal stretch at 1-33 (MGLQAGTRQLHGNLILLPVAVVMLLLCTSPVCA) is a signal peptide. The 213-residue stretch at 34-246 (TASVGLPADC…RPSSWSNPPM (213 aa)) folds into the Fibrinogen C-terminal domain. 2 disulfide bridges follow: Cys-43-Cys-69 and Cys-201-Cys-213. Positions 260 to 269 (PSRSPSLPSP) are enriched in low complexity. A disordered region spans residues 260 to 281 (PSRSPSLPSPITATHTVRNQLQ). The segment covering 270-281 (ITATHTVRNQLQ) has biased composition (polar residues).

Expressed in smal intestine, colon and lung.

In terms of biological role, shows a cytidine deaminase activity on 2'-deoxycytidine (in vitro), however shows no RNA editing activity (in vitro). This is Fibrinogen-like protein 1-like protein from Gallus gallus (Chicken).